Here is a 218-residue protein sequence, read N- to C-terminus: Eukaryotic translation initiation factor 4E-1 (218 aa).

Over residues 1 to 11 the composition is skewed to basic and acidic residues; it reads MQTEQPPKESQ. Disordered regions lie at residues 1 to 20 and 198 to 218; these read MQTEQPPKESQTENTVSEPQ and FSAHEDSSKSGSTRAKTRMSV. Over residues 206-218 the composition is skewed to polar residues; the sequence is KSGSTRAKTRMSV.

Belongs to the eukaryotic initiation factor 4E family. EIF4F is a multi-subunit complex, the composition of which varies with external and internal environmental conditions. It is composed of at least eIF4A, eIF4E and eIF4G. eIF4E is also known to interact with other partners.

Recognizes and binds the 7-methylguanosine-containing mRNA cap during an early step in the initiation of protein synthesis and facilitates ribosome binding by inducing the unwinding of the mRNAs secondary structures. The chain is Eukaryotic translation initiation factor 4E-1 (tif451) from Schizosaccharomyces pombe (strain 972 / ATCC 24843) (Fission yeast).